Reading from the N-terminus, the 392-residue chain is DNA replication and repair protein RecF (392 aa).

30–37 is a binding site for ATP; the sequence is GPNAAGKT.

Belongs to the RecF family.

It is found in the cytoplasm. Its function is as follows. The RecF protein is involved in DNA metabolism; it is required for DNA replication and normal SOS inducibility. RecF binds preferentially to single-stranded, linear DNA. It also seems to bind ATP. In Chloroflexus aggregans (strain MD-66 / DSM 9485), this protein is DNA replication and repair protein RecF.